Consider the following 397-residue polypeptide: MAKEKFDRSLPHCNVGTIGHVDHGKTTLTAALTRVCSEVFGSARVDFDKIDSAPEEKARGITINTAHVEYNSATRHYAHVDCPGHADYVKNMITGAAQMDGAILVCSAADGPMPQTREHILLSRQVGVPYIVVFLNKADLVDDAELLELVEMEVRDLLSTYDFPGDDTPIIIGSARMALEGKDDNEMGTTAVKKLVETLDSYIPQPERAVDKPFLMPIEDVFSISGRGTVVTGRVERGIVKVQDPLEIVGLRDTTVTTCTGVEMFRKLLDEGRAGENCGVLLRGTKRDDVERGQVLVKPGTVKPHTQFEAEIYVLSKEEGGRHTPFFKGYRPQFYFRTTDVTGSCELPEGVEMVMPGDNVKVSVTLIKPIAMEDGLRFAIREGGRTVGAGVVAKIIA.

The tr-type G domain occupies 10–207 (LPHCNVGTIG…TLDSYIPQPE (198 aa)). Positions 19–26 (GHVDHGKT) are G1. Residue 19–26 (GHVDHGKT) coordinates GTP. T26 provides a ligand contact to Mg(2+). The interval 60–64 (GITIN) is G2. The interval 81 to 84 (DCPG) is G3. GTP is bound by residues 81 to 85 (DCPGH) and 136 to 139 (NKAD). The G4 stretch occupies residues 136 to 139 (NKAD). Residues 174 to 176 (SAR) form a G5 region.

This sequence belongs to the TRAFAC class translation factor GTPase superfamily. Classic translation factor GTPase family. EF-Tu/EF-1A subfamily. As to quaternary structure, monomer.

The protein localises to the cytoplasm. It catalyses the reaction GTP + H2O = GDP + phosphate + H(+). GTP hydrolase that promotes the GTP-dependent binding of aminoacyl-tRNA to the A-site of ribosomes during protein biosynthesis. This Pseudomonas syringae pv. tomato (strain ATCC BAA-871 / DC3000) protein is Elongation factor Tu.